A 119-amino-acid polypeptide reads, in one-letter code: Large ribosomal subunit protein bL20 (119 aa).

It belongs to the bacterial ribosomal protein bL20 family.

Functionally, binds directly to 23S ribosomal RNA and is necessary for the in vitro assembly process of the 50S ribosomal subunit. It is not involved in the protein synthesizing functions of that subunit. In Brevibacillus brevis (strain 47 / JCM 6285 / NBRC 100599), this protein is Large ribosomal subunit protein bL20.